Consider the following 155-residue polypeptide: Endoribonuclease YbeY (155 aa).

Residues H110, H114, and H120 each coordinate Zn(2+).

The protein belongs to the endoribonuclease YbeY family. Requires Zn(2+) as cofactor.

It is found in the cytoplasm. In terms of biological role, single strand-specific metallo-endoribonuclease involved in late-stage 70S ribosome quality control and in maturation of the 3' terminus of the 16S rRNA. In Deinococcus radiodurans (strain ATCC 13939 / DSM 20539 / JCM 16871 / CCUG 27074 / LMG 4051 / NBRC 15346 / NCIMB 9279 / VKM B-1422 / R1), this protein is Endoribonuclease YbeY.